The chain runs to 265 residues: tRNA pseudouridine synthase A (265 aa).

D53 serves as the catalytic Nucleophile. Residue Y111 coordinates substrate.

It belongs to the tRNA pseudouridine synthase TruA family. As to quaternary structure, homodimer.

The catalysed reaction is uridine(38/39/40) in tRNA = pseudouridine(38/39/40) in tRNA. Functionally, formation of pseudouridine at positions 38, 39 and 40 in the anticodon stem and loop of transfer RNAs. The protein is tRNA pseudouridine synthase A of Acinetobacter baumannii (strain ATCC 17978 / DSM 105126 / CIP 53.77 / LMG 1025 / NCDC KC755 / 5377).